Reading from the N-terminus, the 170-residue chain is NADH-quinone oxidoreductase subunit B (170 aa).

Residues Cys37, Cys38, Cys102, and Cys131 each contribute to the [4Fe-4S] cluster site.

Belongs to the complex I 20 kDa subunit family. As to quaternary structure, NDH-1 is composed of 14 different subunits. Subunits NuoB, C, D, E, F, and G constitute the peripheral sector of the complex. [4Fe-4S] cluster is required as a cofactor.

The protein resides in the cell inner membrane. It carries out the reaction a quinone + NADH + 5 H(+)(in) = a quinol + NAD(+) + 4 H(+)(out). NDH-1 shuttles electrons from NADH, via FMN and iron-sulfur (Fe-S) centers, to quinones in the respiratory chain. The immediate electron acceptor for the enzyme in this species is believed to be ubiquinone. Couples the redox reaction to proton translocation (for every two electrons transferred, four hydrogen ions are translocated across the cytoplasmic membrane), and thus conserves the redox energy in a proton gradient. This chain is NADH-quinone oxidoreductase subunit B, found in Geobacter sp. (strain M21).